The chain runs to 1034 residues: Tubulin glycylase 3D (1034 aa).

2 stretches are compositionally biased toward polar residues: residues Met-1–Asn-13 and Gln-131–Phe-146. Disordered regions lie at residues Met-1–Asp-21, Gln-131–Tyr-166, and Leu-189–Gln-208. The span at Arg-151–Arg-161 shows a compositional bias: basic residues. Over residues Leu-189–Leu-199 the composition is skewed to low complexity. The 360-residue stretch at Asp-571 to Lys-930 folds into the TTL domain. Residues Gln-741 to Ile-744, Lys-754, and Asp-756 each bind ATP. Residues His-1002–Leu-1034 form a disordered region.

It is found in the cytoplasm. Probable glycylase which modifies tubulin, generating side chains of glycine on the gamma-carboxyl groups of specific glutamate residues within the C-terminal tail of tubulin. The chain is Tubulin glycylase 3D (TTLL3D) from Tetrahymena thermophila (strain SB210).